A 206-amino-acid chain; its full sequence is Charged multivesicular body protein 6 (206 aa).

Residue Gly-2 is the site of N-myristoyl glycine attachment. Positions 11 to 103 (TRVTEQDRAV…AQIEMKVIEG (93 aa)) form a coiled coil. The segment at 167–206 (EADLELPEVPGEELPEVPEQEPVREKERVKKKPEREMVAV) is disordered. The segment covering 168–185 (ADLELPEVPGEELPEVPE) has biased composition (acidic residues). Positions 170 to 181 (LELPEVPGEELP) match the Type-2 MIT-interacting motif motif. Over residues 187–206 (EPVREKERVKKKPEREMVAV) the composition is skewed to basic and acidic residues.

Belongs to the SNF7 family. In terms of assembly, probable core component of the endosomal sorting required for transport complex III (ESCRT-III). ESCRT-III components are thought to multimerize to form a flat lattice on the perimeter membrane of the endosome.

Its subcellular location is the endomembrane system. It localises to the late endosome membrane. Probable core component of the endosomal sorting required for transport complex III (ESCRT-III) which is involved in multivesicular bodies (MVBs) formation and sorting of endosomal cargo proteins into MVBs. MVBs contain intraluminal vesicles (ILVs) that are generated by invagination and scission from the limiting membrane of the endosome and mostly are delivered to lysosomes enabling degradation of membrane proteins, such as stimulated growth factor receptors, lysosomal enzymes and lipids. In the ESCRT-III complex, it probably serves as an acceptor for the ESCRT-II complex on endosomal membranes. This chain is Charged multivesicular body protein 6 (chmp6), found in Danio rerio (Zebrafish).